The primary structure comprises 420 residues: Glutamyl-tRNA reductase (420 aa).

Substrate is bound by residues 49 to 52, Ser107, 112 to 114, and Gln118; these read TCNR and EPQ. The Nucleophile role is filled by Cys50. NADP(+) is bound at residue 187 to 192; sequence GAGETI.

Belongs to the glutamyl-tRNA reductase family. In terms of assembly, homodimer.

The catalysed reaction is (S)-4-amino-5-oxopentanoate + tRNA(Glu) + NADP(+) = L-glutamyl-tRNA(Glu) + NADPH + H(+). The protein operates within porphyrin-containing compound metabolism; protoporphyrin-IX biosynthesis; 5-aminolevulinate from L-glutamyl-tRNA(Glu): step 1/2. Its function is as follows. Catalyzes the NADPH-dependent reduction of glutamyl-tRNA(Glu) to glutamate 1-semialdehyde (GSA). This is Glutamyl-tRNA reductase from Nitrosococcus oceani (strain ATCC 19707 / BCRC 17464 / JCM 30415 / NCIMB 11848 / C-107).